A 393-amino-acid chain; its full sequence is Alpha-1,2 mannosyltransferase KTR1 (393 aa).

Topologically, residues 1–16 (MAKIMIPASKQPVYKK) are cytoplasmic. Residues 17–34 (LGLLLVAVFTVYVFFHGA) traverse the membrane as a helical; Signal-anchor for type II membrane protein segment. The stem region stretch occupies residues 35–68 (QYARGSAPSPKYSTVLSSGSGYKYSKVELPKYTG). Topologically, residues 35 to 393 (QYARGSAPSP…KPAGWQNHIG (359 aa)) are lumenal. Residues 69-393 (PREKATFVTL…KPAGWQNHIG (325 aa)) form a catalytic region. N-linked (GlcNAc...) asparagine glycosylation occurs at N120. Residue E280 is the Nucleophile of the active site.

It belongs to the glycosyltransferase 15 family. Mn(2+) is required as a cofactor. Post-translationally, N-glycosylated.

It is found in the golgi apparatus membrane. It participates in protein modification; protein glycosylation. Mannosyltransferase that transfers a mannose residue from GDP-mannose to a range of acceptors in vitro, forming an alpha-(1-&gt;2)-D-mannosyl-D-mannose linkage. The chain is Alpha-1,2 mannosyltransferase KTR1 (KTR1) from Saccharomyces cerevisiae (strain ATCC 204508 / S288c) (Baker's yeast).